Reading from the N-terminus, the 248-residue chain is ATP synthase subunit a (248 aa).

6 helical membrane-spanning segments follow: residues Thr34–Gly54, Tyr91–Ile111, Ile121–Val141, Phe147–Ile167, Phe197–Ile217, and Leu220–Leu240.

It belongs to the ATPase A chain family. As to quaternary structure, F-type ATPases have 2 components, CF(1) - the catalytic core - and CF(0) - the membrane proton channel. CF(1) has five subunits: alpha(3), beta(3), gamma(1), delta(1), epsilon(1). CF(0) has four main subunits: a, b, b' and c.

The protein localises to the cell inner membrane. In terms of biological role, key component of the proton channel; it plays a direct role in the translocation of protons across the membrane. The protein is ATP synthase subunit a of Dinoroseobacter shibae (strain DSM 16493 / NCIMB 14021 / DFL 12).